A 3004-amino-acid chain; its full sequence is Guanylate cyclase beta (3004 aa).

Over Met-1–Leu-66 the chain is Cytoplasmic. Residues Ile-67–Ile-87 traverse the membrane as a helical segment. Residues Ser-88–Lys-94 lie on the Extracellular side of the membrane. A helical membrane pass occupies residues Tyr-95 to Glu-115. Residues Ser-116–Val-300 are Cytoplasmic-facing. Residues Tyr-301–Phe-321 form a helical membrane-spanning segment. The Extracellular segment spans residues Tyr-322–Thr-334. Asn-332 carries an N-linked (GlcNAc...) asparagine glycan. A helical membrane pass occupies residues Phe-335 to Tyr-355. Topologically, residues Ser-356–Arg-991 are cytoplasmic. Residues Ala-992–Phe-1012 traverse the membrane as a helical segment. The Extracellular segment spans residues Asp-1013 to Ser-1022. A helical transmembrane segment spans residues Ser-1023–Ala-1043. At Ser-1044–Asn-1072 the chain is on the cytoplasmic side. The chain crosses the membrane as a helical span at residues Thr-1073–Leu-1093. Residues Arg-1094–Lys-1105 lie on the Extracellular side of the membrane. The chain crosses the membrane as a helical span at residues Phe-1106–Ser-1126. The Cytoplasmic portion of the chain corresponds to Lys-1127 to His-1130. The helical transmembrane segment at Ile-1131 to Tyr-1151 threads the bilayer. Residues Thr-1152–Asp-1171 lie on the Extracellular side of the membrane. A helical transmembrane segment spans residues Ser-1172–Met-1192. Over Lys-1193 to Arg-1297 the chain is Cytoplasmic. Residues Ile-1298–Ser-1318 traverse the membrane as a helical segment. The Extracellular segment spans residues Lys-1319–Ser-1327. A helical membrane pass occupies residues Leu-1328–Ile-1348. Residues Arg-1349 to Asn-1353 are Cytoplasmic-facing. A helical transmembrane segment spans residues Tyr-1354–Ser-1374. Topologically, residues Glu-1375–Tyr-1394 are extracellular. A helical transmembrane segment spans residues Ile-1395–Ile-1415. Residues Ala-1416–Gln-1457 lie on the Cytoplasmic side of the membrane. Residues Ile-1458 to Tyr-1478 traverse the membrane as a helical segment. At Glu-1479–Gln-1500 the chain is on the extracellular side. The helical transmembrane segment at Ile-1501 to Pro-1521 threads the bilayer. Topologically, residues Lys-1522–Lys-2563 are cytoplasmic. The region spanning Ser-1541–Lys-1696 is the Guanylate cyclase 1 domain. The span at Thr-2463–Thr-2476 shows a compositional bias: polar residues. Residues Thr-2463–Lys-2491 form a disordered region. The segment covering Asp-2477 to Asp-2488 has biased composition (basic and acidic residues). Residues Leu-2564–Ser-2584 form a helical membrane-spanning segment. Over Tyr-2585–Asp-2594 the chain is Extracellular. A helical membrane pass occupies residues Phe-2595–Leu-2615. Topologically, residues Leu-2616–Thr-2634 are cytoplasmic. The helical transmembrane segment at Thr-2635 to Ile-2655 threads the bilayer. Topologically, residues His-2656 to Arg-2667 are extracellular. The chain crosses the membrane as a helical span at residues Ser-2668 to Lys-2688. Residues Asn-2689–Lys-2695 are Cytoplasmic-facing. A helical membrane pass occupies residues Phe-2696–Ile-2716. Over His-2717–Arg-2722 the chain is Extracellular. The helical transmembrane segment at Ile-2723 to Tyr-2743 threads the bilayer. At Leu-2744–Gly-3004 the chain is on the cytoplasmic side. Positions Ala-2793–Glu-2927 constitute a Guanylate cyclase 2 domain. Residues Asp-2798, Ile-2799, and Asp-2842 each contribute to the Mg(2+) site.

In the N-terminal section; belongs to the cation transport ATPase (P-type) (TC 3.A.3) family. Type IV subfamily. This sequence in the C-terminal section; belongs to the adenylyl cyclase class-4/guanylyl cyclase family. Requires Mg(2+) as cofactor. Mn(2+) is required as a cofactor.

The protein resides in the membrane. It catalyses the reaction GTP = 3',5'-cyclic GMP + diphosphate. In terms of biological role, catalyzes the synthesis of the second messenger cGMP from GTP. Probably by regulating cGMP production, required for ookinete gliding motility, which is necessary for the ookinete to traverse the midgut epithelium of the mosquito. This is Guanylate cyclase beta from Plasmodium berghei (strain Anka).